Consider the following 63-residue polypeptide: uncharacterized protein (63 aa).

Positions 1–15 (MGRNHIHKNRDKNKQ) are enriched in basic residues. Residues 1-63 (MGRNHIHKNR…ADNRAKKKSR (63 aa)) form a disordered region. The span at 30 to 44 (GVYEEYSTELADADD) shows a compositional bias: acidic residues. Over residues 45–57 (REAQERAKAADNR) the composition is skewed to basic and acidic residues.

This is an uncharacterized protein from Bacillus subtilis (strain 168).